Consider the following 364-residue polypeptide: 3'(2'),5'-bisphosphate nucleotidase 1 (364 aa).

The active-site Proton acceptor is aspartate 54. 4 residues coordinate Mg(2+): glutamate 77, aspartate 141, isoleucine 143, and aspartate 144. The active-site Proton acceptor is the threonine 146. Positions 146, 243, 272, 275, 289, and 302 each coordinate adenosine 3',5'-bisphosphate. Residues histidine 243, serine 272, lysine 275, arginine 289, and aspartate 302 each coordinate AMP. Aspartate 302 provides a ligand contact to Mg(2+).

It belongs to the inositol monophosphatase superfamily. Mg(2+) is required as a cofactor.

The catalysed reaction is 3'-phosphoadenylyl sulfate + H2O = adenosine 5'-phosphosulfate + phosphate. It carries out the reaction adenosine 3',5'-bisphosphate + H2O = AMP + phosphate. The enzyme catalyses adenosine 2',5'-bisphosphate + H2O = AMP + phosphate. Functionally, phosphatase that converts adenosine 3'-phosphate 5'-phosphosulfate (PAPS) to adenosine 5'-phosphosulfate (APS) and 3'(2')-phosphoadenosine 5'-phosphate (PAP) to AMP. Regulates the flux of sulfur in the sulfur-activation pathway by converting PAPS to APS. Involved in salt tolerance. This Candida albicans (strain SC5314 / ATCC MYA-2876) (Yeast) protein is 3'(2'),5'-bisphosphate nucleotidase 1 (HAL21).